A 266-amino-acid chain; its full sequence is Apolipoprotein A-I (266 aa).

A signal peptide spans 1–18 (MKAVVLTLAVLFLTGSQA). Tandem repeats lie at residues 67–88 (LKLL…EQIG) and 89–110 (PVTQ…QEMS). Residues 67-266 (LKLLDNWDSL…DEAAKKLNAQ (200 aa)) are 10 X approximate tandem repeats. Position 109 is a methionine sulfoxide (Met109). The stretch at 111–121 (KDLEEVKQKVQ) is one 3; half-length repeat. Repeat copies occupy residues 122 to 142 (PYLD…RQKV), 144 to 165 (PLGA…EKLS), 166 to 187 (PLGE…AQLA), 188 to 210 (PYSD…DGGA), and 211 to 231 (SLAE…EKAK). The stretch at 232–242 (PALEDLRQGLL) is one 9; half-length repeat. Repeat unit 10 spans residues 243–266 (PVLESFKVSLLAAVDEAAKKLNAQ).

This sequence belongs to the apolipoprotein A1/A4/E family. In terms of assembly, homodimer. Interacts with APOA1BP and CLU. Component of a sperm activating protein complex (SPAP), consisting of APOA1, an immunoglobulin heavy chain, an immunoglobulin light chain and albumin. Interacts with NDRG1. Interacts with SCGB3A2. Interacts with NAXE and YJEFN3. In terms of processing, glycosylated. Post-translationally, palmitoylated. Phosphorylation sites are present in the extracellular medium. In terms of tissue distribution, major protein of plasma HDL, also found in chylomicrons.

It is found in the secreted. Participates in the reverse transport of cholesterol from tissues to the liver for excretion by promoting cholesterol efflux from tissues and by acting as a cofactor for the lecithin cholesterol acyltransferase (LCAT). As part of the SPAP complex, activates spermatozoa motility. The polypeptide is Apolipoprotein A-I (APOA1) (Ailuropoda melanoleuca (Giant panda)).